A 503-amino-acid polypeptide reads, in one-letter code: D-alanine--D-alanyl carrier protein ligase (503 aa).

151-152 serves as a coordination point for ATP; the sequence is TS. Asp-196 provides a ligand contact to D-alanine. Position 291–296 (291–296) interacts with ATP; the sequence is NTYGPT. Val-300 lines the D-alanine pocket. ATP is bound by residues Asp-382, 393–396, and Lys-491; that span reads YNGR. Residue Lys-491 coordinates D-alanine.

This sequence belongs to the ATP-dependent AMP-binding enzyme family. DltA subfamily.

Its subcellular location is the cytoplasm. The enzyme catalyses holo-[D-alanyl-carrier protein] + D-alanine + ATP = D-alanyl-[D-alanyl-carrier protein] + AMP + diphosphate. It functions in the pathway cell wall biogenesis; lipoteichoic acid biosynthesis. Functionally, catalyzes the first step in the D-alanylation of lipoteichoic acid (LTA), the activation of D-alanine and its transfer onto the D-alanyl carrier protein (Dcp) DltC. In an ATP-dependent two-step reaction, forms a high energy D-alanyl-AMP intermediate, followed by transfer of the D-alanyl residue as a thiol ester to the phosphopantheinyl prosthetic group of the Dcp. D-alanylation of LTA plays an important role in modulating the properties of the cell wall in Gram-positive bacteria, influencing the net charge of the cell wall. The polypeptide is D-alanine--D-alanyl carrier protein ligase (Bacillus anthracis (strain A0248)).